The following is a 137-amino-acid chain: FAD synthase (137 aa).

Residues 5-6 (TF), 10-13 (HPGH), and aspartate 88 contribute to the ATP site.

The protein belongs to the archaeal FAD synthase family. Homodimer. A divalent metal cation is required as a cofactor.

The enzyme catalyses FMN + ATP + H(+) = FAD + diphosphate. It functions in the pathway cofactor biosynthesis; FAD biosynthesis; FAD from FMN: step 1/1. Functionally, catalyzes the transfer of the AMP portion of ATP to flavin mononucleotide (FMN) to produce flavin adenine dinucleotide (FAD) coenzyme. The polypeptide is FAD synthase (Archaeoglobus fulgidus (strain ATCC 49558 / DSM 4304 / JCM 9628 / NBRC 100126 / VC-16)).